A 127-amino-acid polypeptide reads, in one-letter code: Major sperm protein 38 (127 aa).

Ala2 carries the N-acetylalanine modification. Residues 9 to 126 enclose the MSP domain; it reads DIQTQPGTKI…RRKNLPIEYN (118 aa).

As to expression, sperm.

It localises to the cell projection. The protein resides in the pseudopodium. The protein localises to the cytoplasm. Its subcellular location is the cytoskeleton. Its function is as follows. Central component in molecular interactions underlying sperm crawling. Forms an extensive filament system that extends from sperm villipoda, along the leading edge of the pseudopod. In Caenorhabditis elegans, this protein is Major sperm protein 38 (msp-38).